Consider the following 662-residue polypeptide: Sporulation protein RMD8 (662 aa).

Disordered regions lie at residues 1-136 (MSYK…RTSK), 286-320 (YELE…SFNP), and 346-406 (LKKE…QNDF). N-acetylserine is present on serine 2. Basic and acidic residues predominate over residues 99 to 121 (SARREERLSSSSSDRPRQYERLS). Positions 286–304 (YELETSGNNNNANQDTTTV) are enriched in polar residues. Positions 383–395 (SSRSPASPSSIST) are enriched in low complexity. Residues 630-647 (VTWWFILVILFGVIFSLT) traverse the membrane as a helical segment.

This sequence belongs to the RMD1/sif2 family.

Its subcellular location is the membrane. Required for sporulation. The protein is Sporulation protein RMD8 (RMD8) of Saccharomyces cerevisiae (strain ATCC 204508 / S288c) (Baker's yeast).